Reading from the N-terminus, the 101-residue chain is Small ribosomal subunit protein bS6 (101 aa).

This sequence belongs to the bacterial ribosomal protein bS6 family.

Functionally, binds together with bS18 to 16S ribosomal RNA. The sequence is that of Small ribosomal subunit protein bS6 from Arthrobacter sp. (strain FB24).